A 202-amino-acid polypeptide reads, in one-letter code: Imidazoleglycerol-phosphate dehydratase (202 aa).

It belongs to the imidazoleglycerol-phosphate dehydratase family.

It is found in the cytoplasm. The catalysed reaction is D-erythro-1-(imidazol-4-yl)glycerol 3-phosphate = 3-(imidazol-4-yl)-2-oxopropyl phosphate + H2O. The protein operates within amino-acid biosynthesis; L-histidine biosynthesis; L-histidine from 5-phospho-alpha-D-ribose 1-diphosphate: step 6/9. The polypeptide is Imidazoleglycerol-phosphate dehydratase (Rhodopirellula baltica (strain DSM 10527 / NCIMB 13988 / SH1)).